Here is a 473-residue protein sequence, read N- to C-terminus: ATP synthase subunit beta 2 (473 aa).

158–165 (GGAGVGKT) is an ATP binding site.

Belongs to the ATPase alpha/beta chains family. As to quaternary structure, F-type ATPases have 2 components, CF(1) - the catalytic core - and CF(0) - the membrane proton channel. CF(1) has five subunits: alpha(3), beta(3), gamma(1), delta(1), epsilon(1). CF(0) has three main subunits: a(1), b(2) and c(9-12). The alpha and beta chains form an alternating ring which encloses part of the gamma chain. CF(1) is attached to CF(0) by a central stalk formed by the gamma and epsilon chains, while a peripheral stalk is formed by the delta and b chains.

It localises to the cell membrane. It carries out the reaction ATP + H2O + 4 H(+)(in) = ADP + phosphate + 5 H(+)(out). In terms of biological role, produces ATP from ADP in the presence of a proton gradient across the membrane. The catalytic sites are hosted primarily by the beta subunits. This Listeria monocytogenes serotype 4b (strain F2365) protein is ATP synthase subunit beta 2.